A 342-amino-acid chain; its full sequence is Phosphate acyltransferase (342 aa).

The protein belongs to the PlsX family. Homodimer. Probably interacts with PlsY.

It is found in the cytoplasm. The enzyme catalyses a fatty acyl-[ACP] + phosphate = an acyl phosphate + holo-[ACP]. It participates in lipid metabolism; phospholipid metabolism. Its function is as follows. Catalyzes the reversible formation of acyl-phosphate (acyl-PO(4)) from acyl-[acyl-carrier-protein] (acyl-ACP). This enzyme utilizes acyl-ACP as fatty acyl donor, but not acyl-CoA. This Shewanella pealeana (strain ATCC 700345 / ANG-SQ1) protein is Phosphate acyltransferase.